We begin with the raw amino-acid sequence, 336 residues long: Cytoskeleton protein RodZ (336 aa).

The Cytoplasmic segment spans residues 1-111; the sequence is MNTEATHDQN…LGKRRKKRDG (111 aa). Residues 19–71 enclose the HTH cro/C1-type domain; it reads LRNAREQLGLSQQAVAERLCLKVSTVRDIEEDKAPADLASTFLRGYIRSYARL. The H-T-H motif DNA-binding region spans 30 to 49; it reads QQAVAERLCLKVSTVRDIEE. The helical; Signal-anchor for type II membrane protein transmembrane segment at 112-132 threads the bilayer; the sequence is WLMTFTWLVLFVVIGLSGAWW. At 133–336 the chain is on the periplasmic side; sequence WQDHKAQQEE…TLNAEQSPAQ (204 aa). Positions 148-164 are enriched in polar residues; sequence DQSSAELNNNQSQSVPL. The disordered stretch occupies residues 148-245; the sequence is DQSSAELNNN…PLPTDQAGVT (98 aa). Low complexity predominate over residues 165 to 201; sequence DTSTTTDQAMATTPTSPVDTTATNTQTPAATTAPSPT. The segment covering 202-217 has biased composition (polar residues); it reads VDSQQNAVVPPSQANV. The segment covering 218-240 has biased composition (low complexity); sequence DTAATPAPAATTTPDGAAPLPTD.

It belongs to the RodZ family.

The protein localises to the cell inner membrane. In terms of biological role, cytoskeletal protein that is involved in cell-shape control through regulation of the length of the long axis. The polypeptide is Cytoskeleton protein RodZ (Escherichia coli O7:K1 (strain IAI39 / ExPEC)).